A 416-amino-acid chain; its full sequence is Glyceraldehyde-3-phosphate dehydrogenase, chloroplastic (416 aa).

The transit peptide at methionine 1–serine 78 directs the protein to the chloroplast. Residues arginine 90 to isoleucine 91, aspartate 114, and arginine 158 each bind NADP(+). D-glyceraldehyde 3-phosphate contacts are provided by residues serine 232–threonine 234, threonine 263, arginine 278, threonine 291–glycine 292, and arginine 314. Cysteine 233 serves as the catalytic Nucleophile. Position 396 (asparagine 396) interacts with NADP(+).

It belongs to the glyceraldehyde-3-phosphate dehydrogenase family. As to quaternary structure, homotetramer.

It is found in the plastid. The protein resides in the chloroplast. It carries out the reaction D-glyceraldehyde 3-phosphate + phosphate + NADP(+) = (2R)-3-phospho-glyceroyl phosphate + NADPH + H(+). The protein operates within carbohydrate biosynthesis; Calvin cycle. This is Glyceraldehyde-3-phosphate dehydrogenase, chloroplastic (GAPA) from Gracilaria gracilis (Red alga).